The following is a 95-amino-acid chain: UPF0358 protein BT9727_3692 (95 aa).

It belongs to the UPF0358 family.

In Bacillus thuringiensis subsp. konkukian (strain 97-27), this protein is UPF0358 protein BT9727_3692.